The sequence spans 189 residues: Riboflavin transporter RibU (189 aa).

Topologically, residues 1 to 9 (MNGRRKLNM) are cytoplasmic. The chain crosses the membrane as a helical span at residues 10–29 (QQNKRLITISMLSAIAFVLT). Residues 30-44 (FIKFPIPFLPPYLTL) are Periplasmic-facing. Positions 45–56 (DFSDVPSLLATF) form an intramembrane region, helical. At 57–58 (TF) the chain is on the cytoplasmic side. A helical transmembrane segment spans residues 59–78 (GPVAGIIVALVKNLLNYLFS). Over 79 to 82 (MGDP) the chain is Periplasmic. A helical transmembrane segment spans residues 83–104 (VGPFANFLAGASFLLTAYAIYK). Residues 105-107 (NKR) are Cytoplasmic-facing. The chain crosses the membrane as a helical span at residues 108 to 132 (STKSLITGLIIATIVMTIVLSILNY). Over 133–159 (FVLLPLYGMIFNLADIANNLKVIIVSG) the chain is Periplasmic. A helical transmembrane segment spans residues 160–182 (IIPFNIIKGIVISIVFILLYRRL). At 183-189 (ANFLKRI) the chain is on the cytoplasmic side.

Belongs to the prokaryotic riboflavin transporter (P-RFT) (TC 2.A.87) family. Forms a stable energy-coupling factor (ECF) transporter complex composed of a membrane-embedded substrate-binding protein (S component), 2 ATP-binding proteins (A component) and 2 transmembrane proteins (T component). May be able to interact with more than 1 S component at a time.

It localises to the cell membrane. Functionally, mediates riboflavin uptake, may also transport FMN and roseoflavin. Probably a riboflavin-binding protein that interacts with the energy-coupling factor (ECF) ABC-transporter complex. Unlike classic ABC transporters this ECF transporter provides the energy necessary to transport a number of different substrates. The substrates themselves are bound by transmembrane, not extracytoplasmic soluble proteins. The sequence is that of Riboflavin transporter RibU (ribU) from Staphylococcus aureus (strain TCH60).